Consider the following 131-residue polypeptide: Phosphoribosyl-AMP cyclohydrolase (131 aa).

A Mg(2+)-binding site is contributed by aspartate 74. Residue cysteine 75 coordinates Zn(2+). The Mg(2+) site is built by aspartate 76 and aspartate 78. The Zn(2+) site is built by cysteine 91 and cysteine 98.

It belongs to the PRA-CH family. As to quaternary structure, homodimer. Mg(2+) serves as cofactor. The cofactor is Zn(2+).

The protein localises to the cytoplasm. The enzyme catalyses 1-(5-phospho-beta-D-ribosyl)-5'-AMP + H2O = 1-(5-phospho-beta-D-ribosyl)-5-[(5-phospho-beta-D-ribosylamino)methylideneamino]imidazole-4-carboxamide. Its pathway is amino-acid biosynthesis; L-histidine biosynthesis; L-histidine from 5-phospho-alpha-D-ribose 1-diphosphate: step 3/9. Catalyzes the hydrolysis of the adenine ring of phosphoribosyl-AMP. This chain is Phosphoribosyl-AMP cyclohydrolase, found in Bradyrhizobium sp. (strain BTAi1 / ATCC BAA-1182).